The primary structure comprises 112 residues: Small ribosomal subunit protein uS17 (112 aa).

Belongs to the universal ribosomal protein uS17 family. Part of the 30S ribosomal subunit.

Functionally, one of the primary rRNA binding proteins, it binds specifically to the 5'-end of 16S ribosomal RNA. This chain is Small ribosomal subunit protein uS17, found in Haloarcula marismortui (strain ATCC 43049 / DSM 3752 / JCM 8966 / VKM B-1809) (Halobacterium marismortui).